The following is a 117-amino-acid chain: Colipase (117 aa).

Residues 1 to 22 (MNIFNILLPIVVLLLVFGLTAA) form the signal peptide. Disulfide bonds link C39–C50, C45–C61, C49–C83, C71–C91, and C85–C109.

It belongs to the colipase family. As to quaternary structure, forms a 1:1 stoichiometric complex with pancreatic lipase.

The protein resides in the secreted. Colipase is a cofactor of pancreatic lipase. It allows the lipase to anchor itself to the lipid-water interface. Without colipase the enzyme is washed off by bile salts, which have an inhibitory effect on the lipase. The polypeptide is Colipase (clps) (Xenopus tropicalis (Western clawed frog)).